Consider the following 823-residue polypeptide: Apoptosis-resistant E3 ubiquitin protein ligase 1 (823 aa).

The stretch at 52–158 (GNYLDPRSCK…VAYSPYYKIF (107 aa)) is one Filamin repeat. The interval 315-345 (PPMHMTSSQRRPSTAVDEEDEDSPSECHTPE) is disordered. The interaction with SOCS2 stretch occupies residues 483–789 (SISDWSKNFE…THSTLPTAHT (307 aa)). The HECT domain maps to 483–823 (SISDWSKNFE…SEGCEGFGML (341 aa)). The active-site Glycyl thioester intermediate is Cys-790.

Interacts with SOCS2. Interacts (via HECT domain) with HTRA2, DIABLO/SMAC and SEPTIN4; in the cytoplasm following induction of apoptosis. Post-translationally, autoubiquitinated in vitro in the presence of E2 enzyme UBE2D1/UBCH5A.

The catalysed reaction is S-ubiquitinyl-[E2 ubiquitin-conjugating enzyme]-L-cysteine + [acceptor protein]-L-lysine = [E2 ubiquitin-conjugating enzyme]-L-cysteine + N(6)-ubiquitinyl-[acceptor protein]-L-lysine.. It functions in the pathway protein modification; protein ubiquitination. Its function is as follows. E3 ubiquitin-protein ligase that catalyzes 'Lys-11'- or 'Lys-33'-linked polyubiquitin chains, with some preference for 'Lys-33' linkages. E3 ubiquitin-protein ligases accept ubiquitin from an E2 ubiquitin-conjugating enzyme in the form of a thioester and then directly transfers the ubiquitin to targeted substrates. Ubiquitinates SEPTIN4, DIABLO/SMAC and HTRA2 in vitro. Modulates pulmonary inflammation by targeting SOCS2 for ubiquitination and subsequent degradation by the proteasome. This Homo sapiens (Human) protein is Apoptosis-resistant E3 ubiquitin protein ligase 1.